The sequence spans 338 residues: MNPLDQLVIQAQTDFAAADDAAALENAKAKYLGKTGQITEQMKSLGKLAPDERKTQGAVINSAKEKIEAALTARRDALSNAQMESRLNAEAIDITLPGRGRGTGGIHPVMRTWQRVEEIFGSIGFDVADGPEIENDWTNFTALNSPENHPARSMQDTFYIEGNDTQGKPLLLRTHTSPMQVRYARMNKPPIRVIAPGRTYRVDSDATHSPMFHQVEGLWIDENISFADLKGVYLNFVKAFFETDDLQVRFRPSYFPFTEPSAEIDIAFGSGPLKGRWLEVSGAGQVHPNVMRNMGFDPEQFIGFAFGSGLERLTMLRYGINDLRLFYEGDLRFLKQFN.

Mg(2+) is bound at residue glutamate 259.

The protein belongs to the class-II aminoacyl-tRNA synthetase family. Phe-tRNA synthetase alpha subunit type 1 subfamily. As to quaternary structure, tetramer of two alpha and two beta subunits. Mg(2+) is required as a cofactor.

It is found in the cytoplasm. The catalysed reaction is tRNA(Phe) + L-phenylalanine + ATP = L-phenylalanyl-tRNA(Phe) + AMP + diphosphate + H(+). The sequence is that of Phenylalanine--tRNA ligase alpha subunit from Herminiimonas arsenicoxydans.